The primary structure comprises 325 residues: GPI-linked NAD(P)(+)--arginine ADP-ribosyltransferase 1 (325 aa).

The N-terminal stretch at 1–22 is a signal peptide; sequence MKIPAMMSLLLVSVGLRDGVQV. Disulfide bonds link cysteine 53/cysteine 272 and cysteine 169/cysteine 219. A glycan (N-linked (GlcNAc...) asparagine) is linked at asparagine 65. Residues 73–268 form the TR mART core domain; the sequence is KVYADGWAQA…IYLRALGKRS (196 aa). The NAD(+) site is built by tyrosine 117 and arginine 174. Residues arginine 174 and serine 197 contribute to the active site. Serine 228 lines the NAD(+) pocket. Glutamate 235 is an active-site residue. The N-linked (GlcNAc...) asparagine glycan is linked to asparagine 248. A lipid anchor (GPI-anchor amidated serine) is attached at serine 290. The propeptide at 291 to 325 is removed in mature form; sequence APGSISASCSLLLLLLFLVLSALPENPGLQQLTRC.

This sequence belongs to the Arg-specific ADP-ribosyltransferase family. Abundantly expressed in cardiac and skeletal muscle. Low levels also found in lung.

Its subcellular location is the sarcoplasmic reticulum membrane. The enzyme catalyses L-arginyl-[protein] + NAD(+) = N(omega)-(ADP-D-ribosyl)-L-arginyl-[protein] + nicotinamide + H(+). Has ADP-ribosyltransferase activity toward GLP1R. The protein is GPI-linked NAD(P)(+)--arginine ADP-ribosyltransferase 1 (Art1) of Mus musculus (Mouse).